The chain runs to 72 residues: Tetrahydromethanopterin S-methyltransferase subunit G (72 aa).

The helical transmembrane segment at 48-68 (IGILYGGFIGLLLFLIYTVVS) threads the bilayer.

The protein belongs to the MtrG family. As to quaternary structure, the complex is composed of 8 subunits; MtrA, MtrB, MtrC, MtrD, MtrE, MtrF, MtrG and MtrH.

Its subcellular location is the cell membrane. The enzyme catalyses 5-methyl-5,6,7,8-tetrahydromethanopterin + coenzyme M + 2 Na(+)(in) = 5,6,7,8-tetrahydromethanopterin + methyl-coenzyme M + 2 Na(+)(out). Its pathway is one-carbon metabolism; methanogenesis from CO(2); methyl-coenzyme M from 5,10-methylene-5,6,7,8-tetrahydromethanopterin: step 2/2. In terms of biological role, part of a complex that catalyzes the formation of methyl-coenzyme M and tetrahydromethanopterin from coenzyme M and methyl-tetrahydromethanopterin. This is an energy-conserving, sodium-ion translocating step. The protein is Tetrahydromethanopterin S-methyltransferase subunit G of Methanosarcina barkeri (strain Fusaro / DSM 804).